We begin with the raw amino-acid sequence, 102 residues long: Large ribosomal subunit protein uL23 (102 aa).

This sequence belongs to the universal ribosomal protein uL23 family. Part of the 50S ribosomal subunit. Contacts protein L29, and trigger factor when it is bound to the ribosome.

One of the early assembly proteins it binds 23S rRNA. One of the proteins that surrounds the polypeptide exit tunnel on the outside of the ribosome. Forms the main docking site for trigger factor binding to the ribosome. The chain is Large ribosomal subunit protein uL23 from Methylobacillus flagellatus (strain ATCC 51484 / DSM 6875 / VKM B-1610 / KT).